A 502-amino-acid chain; its full sequence is Pentatricopeptide repeat-containing protein At4g01990, mitochondrial (502 aa).

The transit peptide at 1 to 13 (MMHSVSRLARRFC) directs the protein to the mitochondrion. PPR repeat units lie at residues 139-173 (NQSTYGSLLNCYCVEKEEVKAKAHFENMVDLNHVS), 174-208 (NSLPFNNLMAMYMGLGQPEKVPALVVAMKEKSITP), 209-243 (CDITYSMWIQSCGSLKDLDGVEKVLDEMKAEGEGI), 245-275 (SWNTFANLAAIYIKVGLYGKAEEALKSLENN), 280-310 (VRDCYHFLINLYTGIANASEVYRVWDLLKKR), 315-345 (NNSSYLTMLRALSKLDDIDGVKKVFAEWEST), and 350-381 (DMRMANVAISSYLKQNMYEEAEAVFNGAMKKC).

The protein belongs to the PPR family. P subfamily.

It is found in the mitochondrion. The protein is Pentatricopeptide repeat-containing protein At4g01990, mitochondrial of Arabidopsis thaliana (Mouse-ear cress).